A 326-amino-acid polypeptide reads, in one-letter code: Tetraacyldisaccharide 4'-kinase (326 aa).

Residue 58-65 (SVGGNGKT) participates in ATP binding.

The protein belongs to the LpxK family.

The enzyme catalyses a lipid A disaccharide + ATP = a lipid IVA + ADP + H(+). Its pathway is glycolipid biosynthesis; lipid IV(A) biosynthesis; lipid IV(A) from (3R)-3-hydroxytetradecanoyl-[acyl-carrier-protein] and UDP-N-acetyl-alpha-D-glucosamine: step 6/6. Transfers the gamma-phosphate of ATP to the 4'-position of a tetraacyldisaccharide 1-phosphate intermediate (termed DS-1-P) to form tetraacyldisaccharide 1,4'-bis-phosphate (lipid IVA). This chain is Tetraacyldisaccharide 4'-kinase, found in Pseudoalteromonas translucida (strain TAC 125).